The following is a 793-amino-acid chain: Serine/threonine-protein phosphatase BSU1 (793 aa).

Kelch repeat units follow at residues 53-109 (STTA…LYGT), 110-160 (LILI…IAAQ), 214-262 (IFLL…VFGG), 264-314 (KLHV…NQYQ), and 329-388 (HLYV…EASS). 2 positions are modified to phosphoserine: serine 395 and serine 444. Positions 510, 512, 544, and 576 each coordinate Mn(2+). Histidine 577 acts as the Proton donor in catalysis. Mn(2+)-binding residues include histidine 629 and histidine 707. Serine 764 bears the Phosphoserine mark.

It belongs to the PPP phosphatase family. BSU subfamily. In terms of assembly, interacts with CDG1, CDL1 and ASK7/BIN2. The cofactor is Mn(2+). In terms of processing, phosphorylated at Ser-395 and Ser-444. Phosphorylated at Ser-764 by CDG1 and CDL1. As to expression, mainly expressed in young, elongating tissues. In young seedlings, it is expressed at the base of the hypocotyl, at the tip and most peripheral cell layers of cotyledons, and in the vascular cylinder of roots, particularly in the elongation zone and at the point of emergence of lateral roots. In mature plants, it is still present in the root vasculature, but almost completely absent in fully expanded stems and leaves. In flowers, it is mainly expressed in sepal veins, anther filaments, and in the style, suggesting that BSU1 is expressed in actively growing regions and apparently enriched in vascular tissues.

Its subcellular location is the nucleus. The catalysed reaction is O-phospho-L-seryl-[protein] + H2O = L-seryl-[protein] + phosphate. The enzyme catalyses O-phospho-L-threonyl-[protein] + H2O = L-threonyl-[protein] + phosphate. Its activity is regulated as follows. Activated by phosphorylation at Ser-764 by CDG1. In terms of biological role, phosphatase that acts as a positive regulator of brassinosteroid (BR) signaling. Dephosphorylates BES1, a transcription factor that regulates the expression of BR-response genes, thereby playing an important role in the regulation of response to BRs. Inactivates the negative regulator of BR signaling ASK7/BIN2 by dephosphorylation at 'Tyr-200'. The protein is Serine/threonine-protein phosphatase BSU1 (BSU1) of Arabidopsis thaliana (Mouse-ear cress).